We begin with the raw amino-acid sequence, 218 residues long: DNA replication complex GINS protein psf3 (218 aa).

A compositionally biased stretch (gly residues) spans 147-163; sequence GGGSSYHGRDGGGAGGK. The disordered stretch occupies residues 147–182; that stretch reads GGGSSYHGRDGGGAGGKGKGKATKDDNASNLGVGGA.

Belongs to the GINS3/PSF3 family. In terms of assembly, component of the GINS complex which is a heterotetramer of div-26/sld5, drc-1/psf1, drc-2/psf2 and drc-3/psf3.

It localises to the nucleus. Its function is as follows. The GINS complex plays an essential role in the initiation of DNA replication. This is DNA replication complex GINS protein psf3 (drc-3) from Neurospora crassa (strain ATCC 24698 / 74-OR23-1A / CBS 708.71 / DSM 1257 / FGSC 987).